Consider the following 199-residue polypeptide: N-(5'-phosphoribosyl)anthranilate isomerase (199 aa).

This sequence belongs to the TrpF family.

The catalysed reaction is N-(5-phospho-beta-D-ribosyl)anthranilate = 1-(2-carboxyphenylamino)-1-deoxy-D-ribulose 5-phosphate. Its pathway is amino-acid biosynthesis; L-tryptophan biosynthesis; L-tryptophan from chorismate: step 3/5. The protein is N-(5'-phosphoribosyl)anthranilate isomerase of Streptococcus pneumoniae (strain Taiwan19F-14).